The sequence spans 258 residues: Type III pantothenate kinase (258 aa).

Residue 6-13 (DVGNTNTV) coordinates ATP. Residues Tyr100 and 107–110 (GADR) each bind substrate. The active-site Proton acceptor is Asp109. K(+) is bound at residue Asp129. Residue Thr132 coordinates ATP. Thr184 serves as a coordination point for substrate.

This sequence belongs to the type III pantothenate kinase family. Homodimer. NH4(+) serves as cofactor. It depends on K(+) as a cofactor.

Its subcellular location is the cytoplasm. It catalyses the reaction (R)-pantothenate + ATP = (R)-4'-phosphopantothenate + ADP + H(+). The protein operates within cofactor biosynthesis; coenzyme A biosynthesis; CoA from (R)-pantothenate: step 1/5. Catalyzes the phosphorylation of pantothenate (Pan), the first step in CoA biosynthesis. The chain is Type III pantothenate kinase from Geobacillus sp. (strain WCH70).